Reading from the N-terminus, the 125-residue chain is Small ribosomal subunit protein eS8 (125 aa).

It belongs to the eukaryotic ribosomal protein eS8 family. In terms of assembly, part of the 30S ribosomal subunit.

The polypeptide is Small ribosomal subunit protein eS8 (Methanocella arvoryzae (strain DSM 22066 / NBRC 105507 / MRE50)).